The primary structure comprises 382 residues: Gap junction alpha-1 protein (382 aa).

Over 2 to 23 (GDWSALGKLLDKVQAYSTAGGK) the chain is Cytoplasmic. Residue Ser5 is modified to Phosphoserine. A helical transmembrane segment spans residues 24–44 (VWLSVLFIFRILLLGTAVESA). At 45 to 76 (WGDEQSAFRCNTQQPGCENVCYDKSFPISHVR) the chain is on the extracellular side. 2 cysteine pairs are disulfide-bonded: Cys54-Cys192 and Cys187-Cys198. A helical transmembrane segment spans residues 77–97 (FWVLQIIFVSVPTLLYLAHVF). Residues 98–155 (YVMRKEEKLNKKEEELKVAQTDGVNVEMHLKQIEIKKFKYGIEEHGKVKMRGGLLRTY) are Cytoplasmic-facing. A Glycyl lysine isopeptide (Lys-Gly) (interchain with G-Cter in SUMO) cross-link involves residue Lys144. The chain crosses the membrane as a helical span at residues 156–176 (IISILFKSVFEVAFLLIQWYI). Topologically, residues 177–207 (YGFSLSAVYTCKRDPCPHQVDCFLSRPTEKT) are extracellular. The helical transmembrane segment at 208-228 (IFIIFMLVVSLVSLALNIIEL) threads the bilayer. The Cytoplasmic segment spans residues 229–382 (FYVFFKGVKD…SRPRPDDLEI (154 aa)). Lys237 participates in a covalent cross-link: Glycyl lysine isopeptide (Lys-Gly) (interchain with G-Cter in SUMO). The interaction with NOV stretch occupies residues 244-382 (SDPYHATTGP…SRPRPDDLEI (139 aa)). The residue at position 247 (Tyr247) is a Phosphotyrosine. A phosphoserine mark is found at Ser255, Ser257, and Ser262. The segment at 264–382 (KYAYFNGCSS…SRPRPDDLEI (119 aa)) is interaction with UBQLN4. An S-nitrosocysteine modification is found at Cys271. Thr275 is modified (phosphothreonine). 3 positions are modified to phosphoserine: Ser306, Ser314, and Ser325. The span at 317–332 (QNRMGQAGSTISNSHA) shows a compositional bias: polar residues. The segment at 317 to 382 (QNRMGQAGST…SRPRPDDLEI (66 aa)) is disordered. A Phosphothreonine modification is found at Thr326. Residues Ser328, Ser330, and Ser365 each carry the phosphoserine modification. Positions 362–374 (RPSSRASSRASSR) are enriched in low complexity. Ser368 is subject to Phosphoserine; by PKC/PRKCG and PKC/PRKCD. 2 positions are modified to phosphoserine: Ser369 and Ser373.

This sequence belongs to the connexin family. Alpha-type (group II) subfamily. As to quaternary structure, a connexon is composed of a hexamer of connexins. Interacts with SGSM3. Interacts with RIC1/CIP150. Interacts with CNST and CSNK1D. Interacts (via C-terminus) with TJP1. Interacts (via C-terminus) with SRC (via SH3 domain). Interacts (not ubiquitinated) with UBQLN4 (via UBA domain). Interacts with NOV. Interacts with TMEM65. Interacts with ANK3/ANKG and PKP2. In terms of processing, contains at least one intramolecular disulfide bond. Phosphorylation at Ser-325, Ser-328 and Ser-330 by CK1 modulates gap junction assembly. Phosphorylated at Ser-368 by PRKCG; phosphorylation induces disassembly of gap junction plaques and inhibition of gap junction activity. Phosphorylation at Ser-368 by PRKCD triggers its internalization into small vesicles leading to proteasome-mediated degradation. Post-translationally, sumoylated with SUMO1, SUMO2 and SUMO3, which may regulate the level of functional Cx43 gap junctions at the plasma membrane. May be desumoylated by SENP1 or SENP2. In terms of processing, S-nitrosylation at Cys-271 is enriched at the muscle endothelial gap junction in arteries, it augments channel permeability and may regulate of smooth muscle cell to endothelial cell communication. Acetylated in the developing cortex; leading to delocalization from the cell membrane. In terms of tissue distribution, detected in ventricle and atrium (at protein level).

The protein resides in the cell membrane. It localises to the cell junction. Its subcellular location is the gap junction. It is found in the endoplasmic reticulum. In terms of biological role, gap junction protein that acts as a regulator of bladder capacity. A gap junction consists of a cluster of closely packed pairs of transmembrane channels, the connexons, through which materials of low MW diffuse from one cell to a neighboring cell. Negative regulator of bladder functional capacity: acts by enhancing intercellular electrical and chemical transmission, thus sensitizing bladder muscles to cholinergic neural stimuli and causing them to contract. May play a role in cell growth inhibition through the regulation of NOV expression and localization. Plays an essential role in gap junction communication in the ventricles. In Rattus norvegicus (Rat), this protein is Gap junction alpha-1 protein (Gja1).